A 1101-amino-acid chain; its full sequence is Cytospin-A (1101 aa).

2 disordered regions span residues 1–170 (MRKA…NQIS) and 280–366 (SDCG…SGNA). Polar residues-rich tracts occupy residues 29–48 (ESSA…LSKA) and 64–86 (ASNS…TAMS). The segment covering 93–110 (RSSAGSSSNTKRSGSSGA) has biased composition (low complexity). 2 stretches are compositionally biased toward basic and acidic residues: residues 114–125 (GSSRERLRERSR) and 151–165 (GRTD…KSKS). A coiled-coil region spans residues 162-254 (KSKSDNQISD…LKDRLNALGF (93 aa)). Positions 333–355 (LTSSDDALDAPSSSSESEGLPST) are enriched in low complexity. Coiled coils occupy residues 373–427 (CLTE…MDSL) and 492–785 (QHLS…RGRV). The segment at 923 to 978 (SISVSRRSSEELKRDISVPDGSSAPSLMVMTSPSPQLSLSSSSPTASVTPTARSRI) is disordered. Over residues 929–939 (RSSEELKRDIS) the composition is skewed to basic and acidic residues. Positions 953 to 975 (TSPSPQLSLSSSSPTASVTPTAR) are enriched in low complexity. In terms of domain architecture, Calponin-homology (CH) spans 995–1100 (GSKRNALLKW…YVTSIYKYFE (106 aa)).

It belongs to the cytospin-A family. May interact with both microtubules and actin cytoskeleton.

It localises to the cytoplasm. Its subcellular location is the cytoskeleton. The protein localises to the spindle. It is found in the cell junction. The protein resides in the gap junction. Its function is as follows. Involved in cytokinesis and spindle organization. May play a role in actin cytoskeleton organization and microtubule stabilization and hence required for proper cell adhesion and migration. The polypeptide is Cytospin-A (specc1l) (Xenopus tropicalis (Western clawed frog)).